The chain runs to 321 residues: uncharacterized protein (321 aa).

At 1 to 5 (MKQQA) the chain is on the cytoplasmic side. Residues 6 to 26 (GIGILLALTTAICWGALPIAM) form a helical membrane-spanning segment. An EamA 1 domain is found at 17–144 (ICWGALPIAM…LLSGLVMFFN (128 aa)). Topologically, residues 27 to 35 (KQVLEVMEP) are periplasmic. The helical transmembrane segment at 36–56 (PTIVFYRFLMASIGLGAILAV) threads the bilayer. Topologically, residues 57–70 (KKRLPPLRVFRKPR) are cytoplasmic. A helical membrane pass occupies residues 71–91 (WLILLAVATAGLFGNFILFSS). The Periplasmic segment spans residues 92–99 (SLQYLSPT). Residues 100-120 (ASQVIGQLSPVGMMVASVFIL) form a helical membrane-spanning segment. The Cytoplasmic portion of the chain corresponds to 121–130 (KEKMRSTQVV). Residues 131–151 (GALMLLSGLVMFFNTSLVEIF) form a helical membrane-spanning segment. At 152–156 (TKLTD) the chain is on the periplasmic side. The helical transmembrane segment at 157-177 (YTWGVIFGVGAATVWVSYGVA) threads the bilayer. The region spanning 169 to 292 (TVWVSYGVAQ…GYLGAFVVVA (124 aa)) is the EamA 2 domain. Topologically, residues 178–190 (QKVLLRRLASPQI) are cytoplasmic. Residues 191 to 211 (LFLLYTLCTIALFPLAKPGVI) form a helical membrane-spanning segment. The Periplasmic portion of the chain corresponds to 212-216 (AQLSH). A helical membrane pass occupies residues 217 to 237 (WQLACLIFCGLNTLVGYGALA). The Cytoplasmic portion of the chain corresponds to 238–249 (EAMARWQAAQVS). The chain crosses the membrane as a helical span at residues 250–270 (AIITLTPLFTLFFSDLLSLAW). Residues 271 to 278 (PDFFARPM) are Periplasmic-facing. Residues 279–299 (LNLLGYLGAFVVVAGAMYSAI) traverse the membrane as a helical segment. At 300–321 (GHRIWGGLRKHTTVVSQPRAGE) the chain is on the cytoplasmic side.

It belongs to the EamA transporter family.

It is found in the cell inner membrane. This is an uncharacterized protein from Escherichia coli O157:H7.